The chain runs to 419 residues: UDP-N-acetylglucosamine 1-carboxyvinyltransferase (419 aa).

Position 22–23 (22–23) interacts with phosphoenolpyruvate; sequence KN. Arg91 contributes to the UDP-N-acetyl-alpha-D-glucosamine binding site. Cys115 acts as the Proton donor in catalysis. A 2-(S-cysteinyl)pyruvic acid O-phosphothioketal modification is found at Cys115. Residues 120–124, 160–163, Asp305, and Ile327 contribute to the UDP-N-acetyl-alpha-D-glucosamine site; these read RPVDL and KVSV.

The protein belongs to the EPSP synthase family. MurA subfamily.

It localises to the cytoplasm. The enzyme catalyses phosphoenolpyruvate + UDP-N-acetyl-alpha-D-glucosamine = UDP-N-acetyl-3-O-(1-carboxyvinyl)-alpha-D-glucosamine + phosphate. It participates in cell wall biogenesis; peptidoglycan biosynthesis. Cell wall formation. Adds enolpyruvyl to UDP-N-acetylglucosamine. This is UDP-N-acetylglucosamine 1-carboxyvinyltransferase from Cronobacter sakazakii (strain ATCC BAA-894) (Enterobacter sakazakii).